A 280-amino-acid chain; its full sequence is MSKVITDVFYTAFKTALPLTSSPLVQCITNEITVESMANALLYIDAKPVMADDQREFPEFFAQSDALLLNLGHISEVRQQNLLAAGKFAQATNQPTVIDLVGVSATQLRYDLGHQLLANHPNVVKGNISEMRRFADLKSTGRGVDGSQLDQSATALGELAASLQQLTQAFPTTTFLATGKIDLVVSAKGTWYLKNGVPQLDRFTGTGDIVGALIAALLGTGLDNDAAVVVAVSYFNCCGEVAAAQNRTGGLAAFREGTLNQLSLLAATADWLQMVKGEAL.

Residue Met50 participates in substrate binding. Residues Lys125 and Thr178 each contribute to the ATP site. Residue Gly205 coordinates substrate.

This sequence belongs to the Thz kinase family. Mg(2+) is required as a cofactor.

The enzyme catalyses 5-(2-hydroxyethyl)-4-methylthiazole + ATP = 4-methyl-5-(2-phosphooxyethyl)-thiazole + ADP + H(+). Its pathway is cofactor biosynthesis; thiamine diphosphate biosynthesis; 4-methyl-5-(2-phosphoethyl)-thiazole from 5-(2-hydroxyethyl)-4-methylthiazole: step 1/1. Its function is as follows. Catalyzes the phosphorylation of the hydroxyl group of 4-methyl-5-beta-hydroxyethylthiazole (THZ). The polypeptide is Hydroxyethylthiazole kinase (Lacticaseibacillus casei (strain BL23) (Lactobacillus casei)).